Here is a 58-residue protein sequence, read N- to C-terminus: Alpha-conotoxin-like Pu1.6 (58 aa).

The N-terminal stretch at 1–17 (MFTVFLLVVLVTTVVFS) is a signal peptide. Residues 18–35 (TSDHRPASNHENRRASKR) constitute a propeptide that is removed on maturation. 2 disulfide bridges follow: cysteine 44-cysteine 50 and cysteine 45-cysteine 58. Residues 46–48 (TNP) form a lacks the Ser-Xaa-Pro motif that is crucial for potent interaction with nAChR region.

Belongs to the conotoxin A superfamily. In terms of tissue distribution, expressed by the venom duct.

The protein resides in the secreted. In terms of biological role, alpha-conotoxins act on postsynaptic membranes, they bind to the nicotinic acetylcholine receptors (nAChR) and thus inhibit them. Has possibly a distinct nAChR binding mode from other alpha-conotoxins, due to a different three residue motif (lacks the Ser-Xaa-Pro motif). The polypeptide is Alpha-conotoxin-like Pu1.6 (Conus pulicarius (Flea-bitten cone)).